A 306-amino-acid polypeptide reads, in one-letter code: Serine/threonine-protein kinase csk1 (306 aa).

Positions 11-306 (LTDIRHLTDG…KVSARLSQYA (296 aa)) constitute a Protein kinase domain. Residues 17 to 25 (LTDGTISEV) and Lys-40 each bind ATP. The active-site Proton acceptor is Asp-129.

The protein belongs to the protein kinase superfamily. CMGC Ser/Thr protein kinase family. CDC2/CDKX subfamily.

It catalyses the reaction L-seryl-[protein] + ATP = O-phospho-L-seryl-[protein] + ADP + H(+). The catalysed reaction is L-threonyl-[protein] + ATP = O-phospho-L-threonyl-[protein] + ADP + H(+). In terms of biological role, acts as a CAK-activating kinase that specifically activates crk1 of the crk1-mcs2 CAK complex. In Schizosaccharomyces pombe (strain 972 / ATCC 24843) (Fission yeast), this protein is Serine/threonine-protein kinase csk1 (csk1).